Reading from the N-terminus, the 606-residue chain is Transmembrane 9 superfamily member 1 (606 aa).

The N-terminal stretch at 1–27 (MTVLGHPRSWSCRWWPLLLLLLLTGRE) is a signal peptide. N-linked (GlcNAc...) asparagine glycosylation occurs at Asn-178. The next 4 helical transmembrane spans lie at 237 to 257 (LSII…AVIL), 310 to 330 (VLGV…MALL), 339 to 359 (GAIN…SGYV), and 373 to 393 (VWNI…TWSV). N-linked (GlcNAc...) asparagine glycosylation is present at Asn-401. 4 consecutive transmembrane segments (helical) span residues 412–432 (ILLL…IGGI), 469–489 (VGGF…FATV), 499–519 (GILF…SIAL), and 535–555 (SVLS…FYYA). Residue Asn-559 is glycosylated (N-linked (GlcNAc...) asparagine). A helical membrane pass occupies residues 570 to 590 (FGYSLLTGYVFFLMLGTISFF).

Belongs to the nonaspanin (TM9SF) (TC 9.A.2) family.

The protein localises to the lysosome membrane. It is found in the cytoplasmic vesicle. Its subcellular location is the autophagosome membrane. Plays an essential role in autophagy. This chain is Transmembrane 9 superfamily member 1 (TM9SF1), found in Bos taurus (Bovine).